Reading from the N-terminus, the 109-residue chain is Large ribosomal subunit protein uL23 (109 aa).

Belongs to the universal ribosomal protein uL23 family. Part of the 50S ribosomal subunit. Contacts protein L29, and trigger factor when it is bound to the ribosome.

Its function is as follows. One of the early assembly proteins it binds 23S rRNA. One of the proteins that surrounds the polypeptide exit tunnel on the outside of the ribosome. Forms the main docking site for trigger factor binding to the ribosome. The protein is Large ribosomal subunit protein uL23 of Prosthecochloris aestuarii (strain DSM 271 / SK 413).